The following is a 290-amino-acid chain: Hydroxyacylglutathione hydrolase-like protein (290 aa).

His54, His56, Asp58, His59, His110, Asp134, and His172 together coordinate Zn(2+).

Belongs to the metallo-beta-lactamase superfamily. Glyoxalase II family. Requires Zn(2+) as cofactor.

In terms of biological role, hydrolase acting on ester bonds. The sequence is that of Hydroxyacylglutathione hydrolase-like protein (HAGHL) from Homo sapiens (Human).